The primary structure comprises 294 residues: Putative glutamine amidotransferase HI_1037 (294 aa).

Residue C18 is part of the active site. The 249-residue stretch at 18–266 (CQLLGMNCNT…NGGFVFFKNG (249 aa)) folds into the Glutamine amidotransferase type-2 domain.

The polypeptide is Putative glutamine amidotransferase HI_1037 (Haemophilus influenzae (strain ATCC 51907 / DSM 11121 / KW20 / Rd)).